Here is a 234-residue protein sequence, read N- to C-terminus: LexA repressor (234 aa).

Residues 41 to 61 constitute a DNA-binding region (H-T-H motif); sequence RAEIAAELGFRSPNAAEEHLK. Catalysis depends on for autocatalytic cleavage activity residues serine 152 and lysine 189.

It belongs to the peptidase S24 family. As to quaternary structure, homodimer.

The enzyme catalyses Hydrolysis of Ala-|-Gly bond in repressor LexA.. Its function is as follows. Represses a number of genes involved in the response to DNA damage (SOS response), including recA and lexA. In the presence of single-stranded DNA, RecA interacts with LexA causing an autocatalytic cleavage which disrupts the DNA-binding part of LexA, leading to derepression of the SOS regulon and eventually DNA repair. The sequence is that of LexA repressor from Polaromonas naphthalenivorans (strain CJ2).